A 267-amino-acid chain; its full sequence is Indole-3-glycerol phosphate synthase (267 aa).

It belongs to the TrpC family.

It catalyses the reaction 1-(2-carboxyphenylamino)-1-deoxy-D-ribulose 5-phosphate + H(+) = (1S,2R)-1-C-(indol-3-yl)glycerol 3-phosphate + CO2 + H2O. Its pathway is amino-acid biosynthesis; L-tryptophan biosynthesis; L-tryptophan from chorismate: step 4/5. The chain is Indole-3-glycerol phosphate synthase from Polynucleobacter necessarius subsp. necessarius (strain STIR1).